Reading from the N-terminus, the 970-residue chain is Insulin-degrading enzyme-like 1, peroxisomal (970 aa).

Histidine 69 contributes to the Zn(2+) binding site. Glutamate 72 acts as the Proton acceptor in catalysis. Residue histidine 73 participates in Zn(2+) binding. The active site involves glutamate 143. Glutamate 150 serves as a coordination point for Zn(2+).

Belongs to the peptidase M16 family. It depends on Zn(2+) as a cofactor.

It localises to the peroxisome. In terms of biological role, peptidase that might be involved in pathogen or wound response. Not required for peroxisome biogenesis, indole-3-butyric acid (IBA) metabolism, fatty acid beta-oxidation or degradation of glyoxylate cycle enzymes during seedling development. The polypeptide is Insulin-degrading enzyme-like 1, peroxisomal (PXM16) (Arabidopsis thaliana (Mouse-ear cress)).